Here is a 169-residue protein sequence, read N- to C-terminus: uncharacterized protein (169 aa).

This is an uncharacterized protein from Mycoplasma pneumoniae (strain ATCC 29342 / M129 / Subtype 1) (Mycoplasmoides pneumoniae).